Reading from the N-terminus, the 269-residue chain is Putative pyridoxine kinase (269 aa).

Asn139 lines the ATP pocket. Glu142 contacts Mg(2+). ATP-binding positions include 176 to 180, Asp189, Val205, Gly214, and Lys239; that span reads KGGGR.

It belongs to the ThiD family.

It catalyses the reaction pyridoxal + ATP = pyridoxal 5'-phosphate + ADP + H(+). Functionally, phosphorylates B6 vitamers; functions in a salvage pathway. Uses pyridoxal, pyridoxine, and pyridoxamine as substrates. In Treponema pallidum (strain Nichols), this protein is Putative pyridoxine kinase (pdxK).